The sequence spans 138 residues: Larval cuticle protein 1 (138 aa).

The signal sequence occupies residues M1–A16. In terms of domain architecture, Chitin-binding type R&amp;R spans A49–P110.

In terms of biological role, component of the larval cuticle. This chain is Larval cuticle protein 1 (Lcp1), found in Drosophila miranda (Fruit fly).